The sequence spans 298 residues: MASWEKEKELAHLHQPEDDPLPDLSLLLDMDQFEPTEGPDSNPGAEKIYLQLQVAPGDPSEKTYKFGYEDKEAQNPDLKMRNWVPDPEKMSKWACARLILCGLYNAKKAKELLKMDYDIHWEQSKEDSQYFEIEYHCKMCMTVIHEPMPVSYDKKTGLWIKMGPLRGDIGSVVHTCRRHYERCMSALPSSGEPLKPRVRANPVRRYREKSLIVADRPKRSRWGVAPREQPNTSSGDAMALMPGPCGPFNMDPPGCLLERVPGSEPGTSEMALAMSGGPFWEQVYRDSISGPPTGPSEN.

Basic and acidic residues predominate over residues 1–17 (MASWEKEKELAHLHQPE). A disordered region spans residues 1 to 46 (MASWEKEKELAHLHQPEDDPLPDLSLLLDMDQFEPTEGPDSNPGAE). Residues 91–200 (SKWACARLIL…GEPLKPRVRA (110 aa)) mediate DNA binding. Residues 214–223 (ADRPKRSRWG) carry the Nuclear localization signal motif. The interval 225-298 (APREQPNTSS…SGPPTGPSEN (74 aa)) is transactivation domain.

In terms of assembly, homodimer or homomultimer. Forms complexes with the host nuclear factors NFIA, NFIB, NFIC or NFIX.

Its subcellular location is the host nucleus. In terms of biological role, transcriptional transactivator that activates the viral internal promoter (IP), thereby enhancing its own expression. This transactivation is repressed by nuclear factor I. Also transactivates the long terminal repeat (LTR) promoter, thereby inducing structural gene expression, initiating the late phase of infection. It is therefore a key regulator of viral gene expression. It directly binds to and activates DNA target sites of viral promoters and those of distinct cellular genes. Required for viral replication. This is Protein Bel-1 (bel1) from Chlorocebus aethiops (Green monkey).